Reading from the N-terminus, the 199-residue chain is ATP-dependent Clp protease proteolytic subunit 2 (199 aa).

S95 serves as the catalytic Nucleophile. The active site involves H120.

It belongs to the peptidase S14 family. As to quaternary structure, fourteen ClpP subunits assemble into 2 heptameric rings which stack back to back to give a disk-like structure with a central cavity, resembling the structure of eukaryotic proteasomes.

Its subcellular location is the cytoplasm. The enzyme catalyses Hydrolysis of proteins to small peptides in the presence of ATP and magnesium. alpha-casein is the usual test substrate. In the absence of ATP, only oligopeptides shorter than five residues are hydrolyzed (such as succinyl-Leu-Tyr-|-NHMec, and Leu-Tyr-Leu-|-Tyr-Trp, in which cleavage of the -Tyr-|-Leu- and -Tyr-|-Trp bonds also occurs).. Its function is as follows. Cleaves peptides in various proteins in a process that requires ATP hydrolysis. Has a chymotrypsin-like activity. Plays a major role in the degradation of misfolded proteins. The polypeptide is ATP-dependent Clp protease proteolytic subunit 2 (Mycolicibacterium paratuberculosis (strain ATCC BAA-968 / K-10) (Mycobacterium paratuberculosis)).